Reading from the N-terminus, the 184-residue chain is UPF0301 protein SPO0296 (184 aa).

This sequence belongs to the UPF0301 (AlgH) family.

The chain is UPF0301 protein SPO0296 from Ruegeria pomeroyi (strain ATCC 700808 / DSM 15171 / DSS-3) (Silicibacter pomeroyi).